The chain runs to 338 residues: Glycerol-3-phosphate dehydrogenase [NAD(P)+] (338 aa).

4 residues coordinate NADPH: Ser14, Tyr15, His35, and Lys109. Lys109, Gly138, and Thr140 together coordinate sn-glycerol 3-phosphate. NADPH is bound at residue Ala142. Residues Lys194, Asp247, Ser257, Arg258, and Asn259 each coordinate sn-glycerol 3-phosphate. Lys194 acts as the Proton acceptor in catalysis. Arg258 contacts NADPH. NADPH contacts are provided by Val282 and Glu284.

Belongs to the NAD-dependent glycerol-3-phosphate dehydrogenase family.

It localises to the cytoplasm. It carries out the reaction sn-glycerol 3-phosphate + NAD(+) = dihydroxyacetone phosphate + NADH + H(+). The catalysed reaction is sn-glycerol 3-phosphate + NADP(+) = dihydroxyacetone phosphate + NADPH + H(+). It participates in membrane lipid metabolism; glycerophospholipid metabolism. Its function is as follows. Catalyzes the reduction of the glycolytic intermediate dihydroxyacetone phosphate (DHAP) to sn-glycerol 3-phosphate (G3P), the key precursor for phospholipid synthesis. This Shewanella sediminis (strain HAW-EB3) protein is Glycerol-3-phosphate dehydrogenase [NAD(P)+].